Reading from the N-terminus, the 513-residue chain is Histidine ammonia-lyase (513 aa).

A cross-link (5-imidazolinone (Ala-Gly)) is located at residues 145–147 (ASG). Position 146 is a 2,3-didehydroalanine (Ser) (serine 146).

It belongs to the PAL/histidase family. Contains an active site 4-methylidene-imidazol-5-one (MIO), which is formed autocatalytically by cyclization and dehydration of residues Ala-Ser-Gly.

It is found in the cytoplasm. It carries out the reaction L-histidine = trans-urocanate + NH4(+). Its pathway is amino-acid degradation; L-histidine degradation into L-glutamate; N-formimidoyl-L-glutamate from L-histidine: step 1/3. The polypeptide is Histidine ammonia-lyase (Vibrio vulnificus (strain YJ016)).